A 550-amino-acid chain; its full sequence is Hydroxylamine reductase (550 aa).

Residues cysteine 3, cysteine 6, cysteine 18, and cysteine 25 each coordinate [2Fe-2S] cluster. Histidine 249, glutamate 273, cysteine 317, cysteine 405, cysteine 433, cysteine 458, glutamate 492, and lysine 494 together coordinate hybrid [4Fe-2O-2S] cluster. At cysteine 405 the chain carries Cysteine persulfide.

This sequence belongs to the HCP family. [2Fe-2S] cluster is required as a cofactor. Hybrid [4Fe-2O-2S] cluster serves as cofactor.

It is found in the cytoplasm. It catalyses the reaction A + NH4(+) + H2O = hydroxylamine + AH2 + H(+). Functionally, catalyzes the reduction of hydroxylamine to form NH(3) and H(2)O. This Salmonella typhi protein is Hydroxylamine reductase.